The sequence spans 320 residues: Uroplakin-3b (320 aa).

The signal sequence occupies residues 1–29 (MGLPWGQPHLGLQMLLLALNCLRPSLSLG). The Lumenal segment spans residues 30-240 (EWGSWMDASS…LHPLFSGRPP (211 aa)). N-linked (GlcNAc...) asparagine glycosylation is present at N133. A helical transmembrane segment spans residues 241–266 (TLGLLGSLYHALLQPVVAGGGPGAAA). Residues 267–320 (DRLLHGQALHDPPHPTQRGRHTAGGLQAWPGPPPQPQPLAWPLCMGLGEMGRWE) lie on the Cytoplasmic side of the membrane. The interval 273-303 (QALHDPPHPTQRGRHTAGGLQAWPGPPPQPQ) is disordered.

It belongs to the uroplakin-3 family. In terms of assembly, heterodimer with uroplakin-1B (UPK1B).

The protein localises to the cell membrane. Functionally, component of the asymmetric unit membrane (AUM); a highly specialized biomembrane elaborated by terminally differentiated urothelial cells. May play an important role in AUM-cytoskeleton interaction in terminally differentiated urothelial cells. It also contributes to the formation of urothelial glycocalyx which may play an important role in preventing bacterial adherence. The protein is Uroplakin-3b (UPK3B) of Homo sapiens (Human).